We begin with the raw amino-acid sequence, 750 residues long: Serine/threonine-protein kinase GE16371 (750 aa).

Doublecortin domains lie at 159-245 and 315-398; these read LRIK…VEYN and RIVT…AEDF. The Protein kinase domain occupies 479 to 737; it reads YTLGKIIGDG…SEDILDHYWT (259 aa). ATP contacts are provided by residues 485-493 and Lys508; that span reads IGDGNFAIV. Asp600 serves as the catalytic Proton acceptor.

Belongs to the protein kinase superfamily. CAMK Ser/Thr protein kinase family. CaMK subfamily.

It carries out the reaction L-seryl-[protein] + ATP = O-phospho-L-seryl-[protein] + ADP + H(+). It catalyses the reaction L-threonyl-[protein] + ATP = O-phospho-L-threonyl-[protein] + ADP + H(+). The protein is Serine/threonine-protein kinase GE16371 of Drosophila yakuba (Fruit fly).